A 334-amino-acid chain; its full sequence is CRISPR-associated endonuclease Cas1 (334 aa).

Mn(2+)-binding residues include Glu161, His226, and Glu241.

It belongs to the CRISPR-associated endonuclease Cas1 family. Homodimer, forms a heterotetramer with a Cas2 homodimer. Mg(2+) serves as cofactor. The cofactor is Mn(2+).

Its function is as follows. CRISPR (clustered regularly interspaced short palindromic repeat), is an adaptive immune system that provides protection against mobile genetic elements (viruses, transposable elements and conjugative plasmids). CRISPR clusters contain spacers, sequences complementary to antecedent mobile elements, and target invading nucleic acids. CRISPR clusters are transcribed and processed into CRISPR RNA (crRNA). Acts as a dsDNA endonuclease. Involved in the integration of spacer DNA into the CRISPR cassette. In Methanothermobacter thermautotrophicus (strain ATCC 29096 / DSM 1053 / JCM 10044 / NBRC 100330 / Delta H) (Methanobacterium thermoautotrophicum), this protein is CRISPR-associated endonuclease Cas1.